A 168-amino-acid chain; its full sequence is Cell division inhibitor SulA (168 aa).

The interval 106–112 (ALQTGNY) is ftsZ binding. The interval 161-168 (KIHSSLYH) is lon protease binding.

The protein belongs to the SulA family. In terms of assembly, interacts with FtsZ. Is rapidly cleaved and degraded by the Lon protease once DNA damage is repaired.

In terms of biological role, component of the SOS system and an inhibitor of cell division. Accumulation of SulA causes rapid cessation of cell division and the appearance of long, non-septate filaments. In the presence of GTP, binds a polymerization-competent form of FtsZ in a 1:1 ratio, thus inhibiting FtsZ polymerization and therefore preventing it from participating in the assembly of the Z ring. This mechanism prevents the premature segregation of damaged DNA to daughter cells during cell division. The chain is Cell division inhibitor SulA from Serratia marcescens.